Here is a 179-residue protein sequence, read N- to C-terminus: MTTVKPTSPENPRVFFDITIGGVEAGKVVMELYANTVPKTAENFRALCTGEKGIGKSGKPLSYKGSSFHRVITNFMCQGGDFTMGNGTGGESIYGNKFADENFKLKHFGQGTLSMANAGANTNGSQFFICVAPTDWLDGKHVVFGFVTEGMDVVKKMEAAGSQSGKTTKPVVIANCGQL.

The PPIase cyclophilin-type domain occupies 15–178; it reads FFDITIGGVE…KPVVIANCGQ (164 aa).

Belongs to the cyclophilin-type PPIase family.

Its subcellular location is the cytoplasm. It localises to the cytosol. It carries out the reaction [protein]-peptidylproline (omega=180) = [protein]-peptidylproline (omega=0). With respect to regulation, binds cyclosporin A (CsA). CsA mediates some of its effects via an inhibitory action on PPIase. Functionally, PPIase that catalyzes the cis-trans isomerization of proline imidic peptide bonds in oligopeptides and may therefore assist protein folding. The sequence is that of Peptidyl-prolyl cis-trans isomerase A (ppiA) from Dictyostelium discoideum (Social amoeba).